The following is a 443-amino-acid chain: Inactive polypeptide N-acetylgalactosaminyltransferase-like protein 5 (443 aa).

Residues 1 to 4 (MRNA) lie on the Cytoplasmic side of the membrane. A helical; Signal-anchor for type II membrane protein membrane pass occupies residues 5–27 (IIRCLFYGSLTFGIWTALLFIYL). At 28-443 (HHNHVSNWQK…PELEASVNRS (416 aa)) the chain is on the lumenal side. N87 carries an N-linked (GlcNAc...) asparagine glycan. Intrachain disulfides connect C124-C355 and C346-C422. Residues 133–243 (LPTASIVICF…RVWLEPLLHA (111 aa)) are catalytic subdomain A. Residues D174 and R204 each coordinate substrate. D227 contributes to the Mn(2+) binding site. A substrate-binding site is contributed by S228. A Mn(2+)-binding site is contributed by H229. Positions 301–363 (PIRSPAMSGG…PCSRVGHISK (63 aa)) are catalytic subdomain B. W332 provides a ligand contact to substrate. Residue H360 coordinates Mn(2+).

Belongs to the glycosyltransferase 2 family. GalNAc-T subfamily. Mn(2+) is required as a cofactor. In terms of tissue distribution, expressed in testis.

It localises to the late endosome membrane. In terms of biological role, probable inactive glycosyltransferase required during spermatid development. May participate in protein loading into the acrosomes and accumulation of ubiquitin-proteasome systems around the head-tail coupling apparatus region. This chain is Inactive polypeptide N-acetylgalactosaminyltransferase-like protein 5 (GALNTL5), found in Macaca fascicularis (Crab-eating macaque).